A 349-amino-acid chain; its full sequence is Single-stranded TG1-3 DNA-binding protein (349 aa).

The 83-residue stretch at 45–127 (FRVFVGRLST…REIVVQKARP (83 aa)) folds into the RRM 1 domain. 2 disordered regions span residues 121-208 (VVQK…PNSI) and 298-349 (EDKQ…AITA). Phosphoserine is present on S152. Residues 168–179 (ANTATAPSSNEA) show a composition bias toward polar residues. Positions 181–191 (GVDKKQNEIKG) are enriched in basic and acidic residues. The RRM 2 domain maps to 206–296 (NSIYVSGLSV…LTLVVKSAVF (91 aa)). Composition is skewed to basic and acidic residues over residues 298 to 310 (EDKQ…KNEN) and 327 to 340 (TEPK…EEKS).

It is found in the cytoplasm. Its subcellular location is the nucleus. It localises to the chromosome. The protein localises to the telomere. In terms of biological role, binds single-stranded telomeric sequences of the type (TG[1-3])n in vitro. Has a role in meiosis. The chain is Single-stranded TG1-3 DNA-binding protein (tcg1) from Schizosaccharomyces pombe (strain 972 / ATCC 24843) (Fission yeast).